Consider the following 100-residue polypeptide: Urease subunit gamma (100 aa).

The protein belongs to the urease gamma subunit family. In terms of assembly, heterotrimer of UreA (gamma), UreB (beta) and UreC (alpha) subunits. Three heterotrimers associate to form the active enzyme.

The protein localises to the cytoplasm. The enzyme catalyses urea + 2 H2O + H(+) = hydrogencarbonate + 2 NH4(+). It functions in the pathway nitrogen metabolism; urea degradation; CO(2) and NH(3) from urea (urease route): step 1/1. The sequence is that of Urease subunit gamma from Mycobacterium bovis (strain ATCC BAA-935 / AF2122/97).